Consider the following 477-residue polypeptide: Penton protein (477 aa).

This sequence belongs to the adenoviridae penton family. As to quaternary structure, interacts with the fiber protein (via N-terminal tail region). Interacts with the capsid vertex protein; this interaction binds the penton base to neighboring peripentonal hexons.

It is found in the virion. It localises to the host nucleus. Functionally, major capsid protein that self-associates to form penton base pentamers, each in the shape of a pentagon, situated at the 12 vertices of the pseudo T=25 capsid. Involved in virus secondary attachment to host cell after initial attachment by the fiber protein, and in endocytosis of virions. As the virus enters the host cell, penton proteins are shed concomitant with virion acidification in the endosome. The polypeptide is Penton protein (Canis lupus familiaris (Dog)).